The chain runs to 637 residues: Penicillin-binding protein 1A (637 aa).

Residues 62-224 (LIADLGSERR…NQYDPYSHPE (163 aa)) are transglycosylase. Glutamate 91 acts as the Proton donor; for transglycosylase activity in catalysis. Residues 298 to 612 (EVYTNVDSKV…RLTPIVGDGF (315 aa)) are transpeptidase. Serine 371 serves as the catalytic Acyl-ester intermediate; for transpeptidase activity.

The protein in the N-terminal section; belongs to the glycosyltransferase 51 family. In the C-terminal section; belongs to the transpeptidase family.

The protein localises to the secreted. The catalysed reaction is [GlcNAc-(1-&gt;4)-Mur2Ac(oyl-L-Ala-gamma-D-Glu-L-Lys-D-Ala-D-Ala)](n)-di-trans,octa-cis-undecaprenyl diphosphate + beta-D-GlcNAc-(1-&gt;4)-Mur2Ac(oyl-L-Ala-gamma-D-Glu-L-Lys-D-Ala-D-Ala)-di-trans,octa-cis-undecaprenyl diphosphate = [GlcNAc-(1-&gt;4)-Mur2Ac(oyl-L-Ala-gamma-D-Glu-L-Lys-D-Ala-D-Ala)](n+1)-di-trans,octa-cis-undecaprenyl diphosphate + di-trans,octa-cis-undecaprenyl diphosphate + H(+). The enzyme catalyses Preferential cleavage: (Ac)2-L-Lys-D-Ala-|-D-Ala. Also transpeptidation of peptidyl-alanyl moieties that are N-acyl substituents of D-alanine.. Its pathway is cell wall biogenesis; peptidoglycan biosynthesis. Its function is as follows. Cell wall formation. The protein is Penicillin-binding protein 1A (ponA) of Streptococcus oralis.